Consider the following 732-residue polypeptide: Conidiogenone synthase (732 aa).

The tract at residues 1–311 is terpene cyclase; it reads MADKITDEYA…SLCVPRYCKV (311 aa). Asp-97 is a binding site for Mg(2+). Substrate is bound by residues Asp-97, 169–172, Asn-213, 217–221, and 307–308; these read RIVD, SWDKE, and RY. The DDXXD 1 signature appears at 97–101; sequence DALNQ. The NSE/DTE motif lies at 213 to 221; the sequence is NDLFSWDKE. Residues 312-732 are prenyltransferase; the sequence is DRNPYKDHLE…LRAMEETLQK (421 aa). Residues 348 to 370 form a disordered region; the sequence is KQSELKDPSSSTYKSHFSPLEPN. The isopentenyl diphosphate site is built by Lys-402, Arg-405, and His-434. 2 residues coordinate Mg(2+): Asp-441 and Asp-445. Residues 441 to 445 carry the DDXXD 2 motif; the sequence is DDIQD. Dimethylallyl diphosphate is bound at residue Arg-450. Arg-451 contacts isopentenyl diphosphate. Lys-529, Thr-530, Gln-565, Asn-572, Lys-582, and Lys-592 together coordinate dimethylallyl diphosphate.

In the N-terminal section; belongs to the terpene synthase family. It in the C-terminal section; belongs to the FPP/GGPP synthase family. In terms of assembly, hexamer. Requires Mg(2+) as cofactor.

The enzyme catalyses isopentenyl diphosphate + (2E,6E)-farnesyl diphosphate = (2E,6E,10E)-geranylgeranyl diphosphate + diphosphate. Its pathway is secondary metabolite biosynthesis; terpenoid biosynthesis. Functionally, bifunctional terpene synthase; part of the gene cluster that mediates the biosynthesis of conidiogenone, a diterpene known to induce the conidiation. The bifunctional terpene synthase PchDS converts isopentenyl diphosphate (IPP) and dimethylallyl diphosphate (DMAPP) into deoxyconidiogenol. The C-terminal prenyltransferase (PT) domain of PchDS catalyzes formation of GGPP, whereas the N-terminal terpene cyclase (TC) domain catalyzes the cyclization of GGPP into deoxyconidiogenol. The cytochrome P450 monooxygenase PchP450 then catalyzes two rounds of oxidation to furnish conidiogenone. The protein is Conidiogenone synthase of Penicillium rubens (strain ATCC 28089 / DSM 1075 / NRRL 1951 / Wisconsin 54-1255) (Penicillium chrysogenum).